Here is a 258-residue protein sequence, read N- to C-terminus: 5'-nucleotidase SurE (258 aa).

Positions 9, 10, 42, and 96 each coordinate a divalent metal cation.

Belongs to the SurE nucleotidase family. A divalent metal cation serves as cofactor.

The protein localises to the cytoplasm. It catalyses the reaction a ribonucleoside 5'-phosphate + H2O = a ribonucleoside + phosphate. Functionally, nucleotidase that shows phosphatase activity on nucleoside 5'-monophosphates. The sequence is that of 5'-nucleotidase SurE from Campylobacter jejuni subsp. doylei (strain ATCC BAA-1458 / RM4099 / 269.97).